The sequence spans 465 residues: tRNA modification GTPase MnmE (465 aa).

The (6S)-5-formyl-5,6,7,8-tetrahydrofolate site is built by arginine 21, glutamate 85, and lysine 124. The region spanning 220–387 (GVPVAIIGET…LQQRLVAAAH (168 aa)) is the TrmE-type G domain. Asparagine 230 contributes to the K(+) binding site. GTP-binding positions include 230-235 (NAGKST), 249-255 (SDIHGTT), and 274-277 (DTAG). Mg(2+) is bound at residue serine 234. K(+) contacts are provided by serine 249, isoleucine 251, and threonine 254. Position 255 (threonine 255) interacts with Mg(2+). Lysine 465 provides a ligand contact to (6S)-5-formyl-5,6,7,8-tetrahydrofolate.

This sequence belongs to the TRAFAC class TrmE-Era-EngA-EngB-Septin-like GTPase superfamily. TrmE GTPase family. Homodimer. Heterotetramer of two MnmE and two MnmG subunits. The cofactor is K(+).

The protein localises to the cytoplasm. Its function is as follows. Exhibits a very high intrinsic GTPase hydrolysis rate. Involved in the addition of a carboxymethylaminomethyl (cmnm) group at the wobble position (U34) of certain tRNAs, forming tRNA-cmnm(5)s(2)U34. This is tRNA modification GTPase MnmE from Bacteroides fragilis (strain YCH46).